The primary structure comprises 340 residues: MTTAPQTLNTDVAIVGAGPTALFAAFECGMLKLSCVLIDALDSVGGQCAALYPEKPIYDIPAHPAIEGGALIEALEQQIAPFDVPRLLGSRVETLEGQRGAFTLKTARGDVITAKAVIIAAGAGAFGPNRPPLDGLEAYERTGAVQYYVKKRADFTGKRVVVAGGGDSALDWALSLSEVAAQVYLLHRRDRFRGAPETLSRIEQQIAAGKIEKVVPYQLHALHGTDGVLSTVEVTTLEGTSRHIEADALLPFYGLSTDLGPIALWGLDTHRNTVPVTPATLESSTPGIFAIGDVATYPGKLKLILQGFSEGAMAAHAIHAIVHPDTALHFEYSTSKGVPG.

FAD is bound by residues Thr20, Asp39, Gln47, Tyr52, Val92, Phe126, Asp293, and Thr334.

Belongs to the ferredoxin--NADP reductase type 2 family. In terms of assembly, homodimer. Requires FAD as cofactor.

The enzyme catalyses 2 reduced [2Fe-2S]-[ferredoxin] + NADP(+) + H(+) = 2 oxidized [2Fe-2S]-[ferredoxin] + NADPH. This Gluconobacter oxydans (strain 621H) (Gluconobacter suboxydans) protein is Ferredoxin--NADP reductase.